A 378-amino-acid polypeptide reads, in one-letter code: Mating-type protein MAT-1 (378 aa).

A DNA-binding region (alpha box) is located at residues 60–117 (KAKKALNAFVGFRCYYIAIPAFKPWPMKKLSNLISLLWEGDPNKSLWSLMAKAWSNIR). Positions 235–256 (SQVDQARVAARNRRRAKRQSAR) are disordered. Residues 244 to 253 (ARNRRRAKRQ) show a composition bias toward basic residues.

This sequence belongs to the MATALPHA1 family.

It is found in the nucleus. Its function is as follows. Mating type proteins are sequence specific DNA-binding proteins that act as master switches in fungal differentiation by controlling gene expression in a cell type-specific fashion. Transcriptional activator that induces the transcription of alpha-specific genes. This chain is Mating-type protein MAT-1 (MAT1), found in Cochliobolus ellisii (Curvularia ellisii).